A 127-amino-acid chain; its full sequence is Large ribosomal subunit protein bL21 (127 aa).

It belongs to the bacterial ribosomal protein bL21 family. In terms of assembly, part of the 50S ribosomal subunit. Contacts protein L20.

Functionally, this protein binds to 23S rRNA in the presence of protein L20. In Synechococcus sp. (strain ATCC 27144 / PCC 6301 / SAUG 1402/1) (Anacystis nidulans), this protein is Large ribosomal subunit protein bL21.